The following is a 613-amino-acid chain: Azole resistance protein 1 (613 aa).

A disordered region spans residues 1–38; that stretch reads MKGEPKTYSMSDLSYYGEKAQQQNEKQQKQYVVRRNST. The Extracellular segment spans residues 1 to 70; sequence MKGEPKTYSM…PKGFILYASL (70 aa). The helical transmembrane segment at 71 to 91 threads the bilayer; sequence IALALSLFLAALDIMIVSTII. Over 92-102 the chain is Cytoplasmic; sequence EEVAKQFGSYS. A helical membrane pass occupies residues 103 to 123; it reads EIGWLFTGYSLPNALLALIWG. Over 124 to 134 the chain is Extracellular; that stretch reads RIATPIGFKET. Residues 135–155 traverse the membrane as a helical segment; sequence MLFAIVIFEIGSLISALANSM. Residues 156–163 are Cytoplasmic-facing; sequence SMLIGGRV. A helical membrane pass occupies residues 164-184; the sequence is IAGVGGCGIQSLSFVIGSTLV. At 185–189 the chain is on the extracellular side; the sequence is EESQR. Residues 190–210 traverse the membrane as a helical segment; sequence GILIAVLSCSFAIASVVGPFL. At 211 to 221 the chain is on the cytoplasmic side; sequence GGVFTSSVTWR. Residues 222 to 242 traverse the membrane as a helical segment; the sequence is WCFYVNLPIGGLAFFLFLFFY. The Extracellular portion of the chain corresponds to 243 to 298; the sequence is NPGLSTFQETMDNIRKFPSQFIEIVRNVAYHLLKIKGFSKLNGWRKPFMELIFMYD. Residues 299–319 traverse the membrane as a helical segment; it reads IIEFVFCSAGFTCILLAFTFG. Over 320–329 the chain is Cytoplasmic; sequence GNRYAWNSAS. A helical membrane pass occupies residues 330-350; it reads IIILFIIGIVLVVLAGIYDFL. The Extracellular portion of the chain corresponds to 351-375; the sequence is VFPKFNIVKATPHYQPLMSWTNIKK. Residues 376-396 traverse the membrane as a helical segment; that stretch reads PGIFTVNIALFLTCAGYISQF. At 397–414 the chain is on the cytoplasmic side; it reads TYIVQYFQLIYNDSAWRA. A helical transmembrane segment spans residues 415–435; that stretch reads AVHLVACIISTVVTAILCGAI. Residues 436–443 lie on the Extracellular side of the membrane; the sequence is TDKTRQIK. The chain crosses the membrane as a helical span at residues 444 to 464; the sequence is PIIVISSIFGVVGAGILTLLN. The Cytoplasmic portion of the chain corresponds to 465 to 472; it reads NNANNSAH. A helical membrane pass occupies residues 473 to 493; it reads IGLLILPGVAFGGLAQSSMLA. Topologically, residues 494–581 are extracellular; the sequence is SQIQLDKKSP…SKLGNIISES (88 aa). A helical membrane pass occupies residues 582–602; sequence LTDVFYMALGFYALSLIFAVF. At 603 to 613 the chain is on the cytoplasmic side; sequence ASNKKVTASLR.

It belongs to the major facilitator superfamily.

The protein localises to the cell membrane. Functionally, transporter protein required for adaptation to high stress imposed by low-chain organic acids, in particular by acetic acid, and for resistance to azoles, especially to ketoconazole and fluconazole. The sequence is that of Azole resistance protein 1 (AZR1) from Saccharomyces cerevisiae (strain ATCC 204508 / S288c) (Baker's yeast).